The following is a 741-amino-acid chain: MEQTYQYAWIIPFLPLPVPMLIGLGLLLFPTATKSLRRMWAFQSVLLLSIVMIFSINLSIQQINSSSVYQYVWSWIINNDFSLEFGYLIDPLTSIMSILITTVGILVLIYSDNYMSHDHGYLRFFAYMSFFSTSMLGLVTSSNLIQIYIFWELVGMCSYLLIGFWFTRPVAAKACQKAFVTNRVGDFGLLLGILGFYWITGSFEFRDLFQIFNNLISNNEVNFFFVTLCAVLLFGGAIAKSAQFPLHVWLPDAMEGPTPISALIRAATMVAAGIFLVARLMPLFIVIPHIMNFISLIGIITVFLGATLALAQKDIKRGLAYSTMSQLGYMMLALGMGSYRSALFHLITHAYSKALLFLGSGSVIHSMETLVGYCPEKSQNMVLMGGLTKHVPITKNSFLLGTLSLCGIPPLACFWSKDEILNDSWLYSPIFATIAWSTAGLTAFYMCRIYLLTFEGHLNVHFQNYSGKMNTPLYSISLWGKEGSKISNKNFPLVTLLKMKKNERTYFFSNKVYKIDENVRNQIQPFLSIPNFGNTKTSLYPYESDNTMLFPILILIIFTLFVGFLGIHFNQDVDILTKWLTPSINLLHKNSNNSIDWYEFSKDAVFSVSIASFGIFIAFFLYKPVYSSFQNLDLINSFVKISPKRIFYDKIKNAIYDWSYNRGYIDAFYGTFLTAGMRKLAEFTHFFDRRIIDGIPNGVGLMSFFVAEVIKSVGGGRISSYLFFYFSYVSIFLLIYYFVNL.

16 helical membrane-spanning segments follow: residues 9–29, 40–60, 89–109, 125–145, 147–167, 185–205, 219–239, 258–278, 283–303, 327–347, 354–374, 396–416, 425–445, 549–569, 605–625, and 721–741; these read WIIP…LLLF, WAFQ…NLSI, IDPL…LVLI, FAYM…SNLI, IYIF…FWFT, GDFG…SFEF, NEVN…GAIA, TPIS…FLVA, LFIV…ITVF, LGYM…FHLI, ALLF…VGYC, NSFL…CFWS, WLYS…TAFY, LFPI…GIHF, VFSV…YKPV, and YLFF…FVNL.

This sequence belongs to the complex I subunit 5 family. As to quaternary structure, NDH is composed of at least 16 different subunits, 5 of which are encoded in the nucleus.

Its subcellular location is the plastid. It is found in the chloroplast thylakoid membrane. It carries out the reaction a plastoquinone + NADH + (n+1) H(+)(in) = a plastoquinol + NAD(+) + n H(+)(out). The catalysed reaction is a plastoquinone + NADPH + (n+1) H(+)(in) = a plastoquinol + NADP(+) + n H(+)(out). Functionally, NDH shuttles electrons from NAD(P)H:plastoquinone, via FMN and iron-sulfur (Fe-S) centers, to quinones in the photosynthetic chain and possibly in a chloroplast respiratory chain. The immediate electron acceptor for the enzyme in this species is believed to be plastoquinone. Couples the redox reaction to proton translocation, and thus conserves the redox energy in a proton gradient. The sequence is that of NAD(P)H-quinone oxidoreductase subunit 5, chloroplastic (ndhF) from Pentatrichia integra (Rock-climbing daisy).